Here is a 180-residue protein sequence, read N- to C-terminus: Small ribosomal subunit protein uS4 (180 aa).

Positions 103–165 (RRLQTIVYRK…KGSPFAKEGH (63 aa)) constitute an S4 RNA-binding domain.

Belongs to the universal ribosomal protein uS4 family. As to quaternary structure, part of the 30S ribosomal subunit. Contacts protein S5. The interaction surface between S4 and S5 is involved in control of translational fidelity.

In terms of biological role, one of the primary rRNA binding proteins, it binds directly to 16S rRNA where it nucleates assembly of the body of the 30S subunit. Its function is as follows. With S5 and S12 plays an important role in translational accuracy. This is Small ribosomal subunit protein uS4 from Thermococcus kodakarensis (strain ATCC BAA-918 / JCM 12380 / KOD1) (Pyrococcus kodakaraensis (strain KOD1)).